Reading from the N-terminus, the 202-residue chain is Protein phosphatase inhibitor 2 family member C (202 aa).

Disordered stretches follow at residues 1–51 and 71–118; these read MSAS…DESS and PGTS…EQES. The segment at 12-17 is required for binding PPP1CC; the sequence is KGILKN. Low complexity predominate over residues 19 to 35; that stretch reads SSSGSSVATSGQQSGGT. Positions 43 to 55 are required for binding PPP1CC; it reads KSQKWDESSILAA. Positions 71-80 are enriched in polar residues; it reads PGTSYMSVQD. The span at 84–112 shows a compositional bias: basic and acidic residues; it reads DSVRDVEGEDSVRGVEGKEATDASDHSCE. The tract at residues 144–147 is required for binding PPP1CC catalytic center, displacing metal ions and inhibition of PPP1CC catalytic activity; sequence HYNE. The disordered stretch occupies residues 162–202; that stretch reads LQSEDNENEETPQGTNEEKTAAEESEEAPLTGGLQTQSCDP.

This sequence belongs to the protein phosphatase inhibitor 2 family. In terms of tissue distribution, detected in sperm (at protein level).

Its function is as follows. Functions as a protein phosphatase inhibitor. It inhibits activity of the catalytic subunit of PP1 and weakly inhibits the activity of myosin-associated phosphates. The chain is Protein phosphatase inhibitor 2 family member C from Homo sapiens (Human).